The following is a 614-amino-acid chain: UvrABC system protein C (614 aa).

The GIY-YIG domain maps to 26 to 104 (NLPGVYKMLG…IKEHRPPYNV (79 aa)). A UVR domain is found at 215-250 (SDIHTTLIEKMEHSAEALDFEKAAFYRDQLSMLREV).

This sequence belongs to the UvrC family. As to quaternary structure, interacts with UvrB in an incision complex.

The protein resides in the cytoplasm. Its function is as follows. The UvrABC repair system catalyzes the recognition and processing of DNA lesions. UvrC both incises the 5' and 3' sides of the lesion. The N-terminal half is responsible for the 3' incision and the C-terminal half is responsible for the 5' incision. This is UvrABC system protein C from Psychrobacter sp. (strain PRwf-1).